Here is a 230-residue protein sequence, read N- to C-terminus: MIKHQFKLSDPRLLSRIGYQFKQLELLQLALTHRSVSHKYNYERLEFLGDSLLGMIIANYLYHAYPNENEGRLTRMRATLVRQEALGKIATDLQLSRCLILSTGELKSGGHHRESILADTVEAIIGAIYLDSGDLNLLKDIVLKWYIPYLDHIEPTDQLKDPKSRLQEYLQARKKPLPVYEVVDIQGDAPHQHFKVECVVDGLPKIYGEGSSRRFAEQAAAAEILKLLEQ.

The region spanning aspartate 10–glycine 133 is the RNase III domain. Glutamate 46 is a binding site for Mg(2+). The active site involves aspartate 50. Mg(2+)-binding residues include aspartate 119 and glutamate 122. Glutamate 122 is an active-site residue. The 70-residue stretch at aspartate 161–glutamine 230 folds into the DRBM domain.

Belongs to the ribonuclease III family. As to quaternary structure, homodimer. The cofactor is Mg(2+).

It localises to the cytoplasm. The catalysed reaction is Endonucleolytic cleavage to 5'-phosphomonoester.. Functionally, digests double-stranded RNA. Involved in the processing of primary rRNA transcript to yield the immediate precursors to the large and small rRNAs (23S and 16S). Processes some mRNAs, and tRNAs when they are encoded in the rRNA operon. Processes pre-crRNA and tracrRNA of type II CRISPR loci if present in the organism. The polypeptide is Ribonuclease 3 (rnc) (Acinetobacter pittii (strain PHEA-2)).